The following is a 582-amino-acid chain: tRNA-guanine(15) transglycosylase (582 aa).

The active-site Nucleophile is D95. Positions 130 and 196 each coordinate substrate. Zn(2+) contacts are provided by C279, C281, and C284. The 76-residue stretch at 507–582 folds into the PUA domain; that stretch reads RMRVVVNKEA…RAVKVRKGVE (76 aa).

Belongs to the archaeosine tRNA-ribosyltransferase family. Homodimer. Zn(2+) serves as cofactor.

The enzyme catalyses guanosine(15) in tRNA + 7-cyano-7-deazaguanine = 7-cyano-7-carbaguanosine(15) in tRNA + guanine. The protein operates within tRNA modification; archaeosine-tRNA biosynthesis. Its function is as follows. Exchanges the guanine residue with 7-cyano-7-deazaguanine (preQ0) at position 15 in the dihydrouridine loop (D-loop) of archaeal tRNAs. In Pyrococcus horikoshii (strain ATCC 700860 / DSM 12428 / JCM 9974 / NBRC 100139 / OT-3), this protein is tRNA-guanine(15) transglycosylase (tgtA).